The chain runs to 162 residues: uncharacterized protein (162 aa).

This is an uncharacterized protein from Salmonella typhi.